Here is a 137-residue protein sequence, read N- to C-terminus: Leaf-specific thionin DB4 (137 aa).

The signal sequence occupies residues 1–28 (MAPSKSIKSVVICVLILGLVLEQVQVEG). 4 disulfide bridges follow: Cys-31–Cys-68, Cys-32–Cys-60, Cys-40–Cys-58, and Cys-44–Cys-54. The propeptide at 75–137 (LNLLPESGEP…DGAVIQSVEA (63 aa)) is acidic domain.

The protein belongs to the plant thionin (TC 1.C.44) family. 4 C-C subfamily.

The protein resides in the secreted. Functionally, thionins are small plant proteins which are toxic to animal cells. They seem to exert their toxic effect at the level of the cell membrane. Their precise function is not known. This is Leaf-specific thionin DB4 (THI1.3) from Hordeum vulgare (Barley).